The primary structure comprises 124 residues: Small ribosomal subunit protein uS13 (124 aa).

Residues 94 to 124 (GLPLRGQRTKNNSRTRKGRRKTVANKKKATK) form a disordered region. Over residues 100 to 124 (QRTKNNSRTRKGRRKTVANKKKATK) the composition is skewed to basic residues.

This sequence belongs to the universal ribosomal protein uS13 family. As to quaternary structure, part of the 30S ribosomal subunit. Forms a loose heterodimer with protein S19. Forms two bridges to the 50S subunit in the 70S ribosome.

Located at the top of the head of the 30S subunit, it contacts several helices of the 16S rRNA. In the 70S ribosome it contacts the 23S rRNA (bridge B1a) and protein L5 of the 50S subunit (bridge B1b), connecting the 2 subunits; these bridges are implicated in subunit movement. Contacts the tRNAs in the A and P-sites. The sequence is that of Small ribosomal subunit protein uS13 from Christiangramia forsetii (strain DSM 17595 / CGMCC 1.15422 / KT0803) (Gramella forsetii).